The chain runs to 158 residues: Phosphopantetheine adenylyltransferase (158 aa).

Serine 10 is a binding site for substrate. Residues 10–11 and histidine 18 contribute to the ATP site; that span reads SF. Substrate contacts are provided by lysine 42, leucine 74, and arginine 88. ATP contacts are provided by residues 89–91, glutamate 99, and 124–130; these read GLR and YANISSS.

This sequence belongs to the bacterial CoaD family. Homohexamer. Mg(2+) serves as cofactor.

It is found in the cytoplasm. The enzyme catalyses (R)-4'-phosphopantetheine + ATP + H(+) = 3'-dephospho-CoA + diphosphate. The protein operates within cofactor biosynthesis; coenzyme A biosynthesis; CoA from (R)-pantothenate: step 4/5. In terms of biological role, reversibly transfers an adenylyl group from ATP to 4'-phosphopantetheine, yielding dephospho-CoA (dPCoA) and pyrophosphate. This is Phosphopantetheine adenylyltransferase from Vesicomyosocius okutanii subsp. Calyptogena okutanii (strain HA).